Reading from the N-terminus, the 55-residue chain is Large ribosomal subunit protein bL33 (55 aa).

It belongs to the bacterial ribosomal protein bL33 family.

The chain is Large ribosomal subunit protein bL33 from Agrobacterium fabrum (strain C58 / ATCC 33970) (Agrobacterium tumefaciens (strain C58)).